The sequence spans 35 residues: Z-limacoditoxin(1)-Dv1 (35 aa).

Positions 1-22 (MKKTFLPIFLVILLASYALANP) are cleaved as a signal peptide. Gln23 carries the post-translational modification Pyrrolidone carboxylic acid. Proline amide is present on Pro32.

It belongs to the limacoditoxin-1 (ACP-like) family. Expressed by the venom secretory cell of the spine. The spine is a cuticular structure containing a single large nucleated venom-secreting cell at its base. It is an independent unit capable of producing, storing and injecting venom. On the back of D.vulnerans caterpillars, spines are grouped together by 50 to 100 to form scoli, of which there are eight in D.vulnerans.

Its subcellular location is the secreted. Functionally, potently activates insect G protein-coupled receptor. It activates the ACP receptor (ACPR) from the mosquito A.aegypti (EC(50)=0.55 nM) with a potency comparable to that of the endogenous ligand. Has no activity on receptors of the closely related neuropeptides adipokinetic hormone and corazonin. In vivo, does not reveal any observable effects when injected into crickets (A.domesticus). Does not induce increase in intracellular calcium in mouse DRG neurons, suggesting that it does not induce pain. The sequence is that of Z-limacoditoxin(1)-Dv1 from Doratifera vulnerans (Mottled cup moth).